A 198-amino-acid polypeptide reads, in one-letter code: dITP/XTP pyrophosphatase (198 aa).

10-15 (SGSDHK) provides a ligand contact to substrate. Residues E43 and D72 each contribute to the Mg(2+) site. The active-site Proton acceptor is D72. Substrate is bound by residues S73, 154–157 (FGYD), K177, and 182–183 (HR).

This sequence belongs to the HAM1 NTPase family. In terms of assembly, homodimer. Mg(2+) serves as cofactor.

It catalyses the reaction XTP + H2O = XMP + diphosphate + H(+). It carries out the reaction dITP + H2O = dIMP + diphosphate + H(+). The catalysed reaction is ITP + H2O = IMP + diphosphate + H(+). Functionally, pyrophosphatase that catalyzes the hydrolysis of nucleoside triphosphates to their monophosphate derivatives, with a high preference for the non-canonical purine nucleotides XTP (xanthosine triphosphate), dITP (deoxyinosine triphosphate) and ITP. Seems to function as a house-cleaning enzyme that removes non-canonical purine nucleotides from the nucleotide pool, thus preventing their incorporation into DNA/RNA and avoiding chromosomal lesions. The polypeptide is dITP/XTP pyrophosphatase (Leptospira biflexa serovar Patoc (strain Patoc 1 / Ames)).